The primary structure comprises 21 residues: Peptide PGLa-R5 (21 aa).

A Leucine amide modification is found at L21.

As to expression, expressed by the skin glands.

It localises to the secreted. Its function is as follows. Antimicrobial peptide. This Xenopus ruwenzoriensis (Uganda clawed frog) protein is Peptide PGLa-R5.